We begin with the raw amino-acid sequence, 262 residues long: MTLQARNLTLARGGAPILTDVSLTLAPGTLVGLLGANGAGKSTLLAALAGELAPRSGQVFLGDADLATLNARQLARRRAVLPQKPSLSFDLGVSDVVGMGAYPFPELDPAAVRQLVRDALEQAGVTHLAQRRYPQLSGGEQQRVQFARVLAQCHAMHAPGQTRYLMLDEPISNLDPRHQMELLATARALAHEAGMGVLVIVHDINQAARWCDTLALLADGRLAALGPPADVLTPDHMRRVYGIEADVLAHPTLPGRLLVLAR.

Positions 3–244 constitute an ABC transporter domain; sequence LQARNLTLAR…DHMRRVYGIE (242 aa). 35 to 42 contributes to the ATP binding site; that stretch reads GANGAGKS.

Belongs to the ABC transporter superfamily. Heme (hemin) importer (TC 3.A.1.14.5) family. In terms of assembly, the complex is composed of two ATP-binding proteins (HmuV), two transmembrane proteins (HmuU) and a solute-binding protein (HmuT).

It localises to the cell inner membrane. Functionally, part of the ABC transporter complex HmuTUV involved in hemin import. Responsible for energy coupling to the transport system. This Bordetella bronchiseptica (strain ATCC BAA-588 / NCTC 13252 / RB50) (Alcaligenes bronchisepticus) protein is Hemin import ATP-binding protein HmuV.